Here is a 262-residue protein sequence, read N- to C-terminus: F-actin-capping protein subunit alpha (262 aa).

It belongs to the F-actin-capping protein alpha subunit family. In terms of assembly, heterodimer of an alpha and a beta subunit.

The protein localises to the cytoplasm. Its subcellular location is the cytoskeleton. F-actin-capping proteins bind in a Ca(2+)-independent manner to the fast growing ends of actin filaments (barbed end) thereby blocking the exchange of subunits at these ends. Unlike other capping proteins (such as gelsolin and severin), these proteins do not sever actin filaments. This Yarrowia lipolytica (strain CLIB 122 / E 150) (Yeast) protein is F-actin-capping protein subunit alpha (CAP1).